Here is a 149-residue protein sequence, read N- to C-terminus: Snake venom vascular endothelial growth factor toxin 2 (149 aa).

The signal sequence occupies residues 1 to 24 (MAAYLLAVAILFCIQGWPSGTVQG). The residue at position 25 (glutamine 25) is a Pyrrolidone carboxylic acid. Intrachain disulfides connect cysteine 38-cysteine 80, cysteine 69-cysteine 115, and cysteine 73-cysteine 117. The tract at residues 118-149 (RPRSGRVNSGKRKRNPEEGGAESQVPLGLTSF) is disordered.

It belongs to the PDGF/VEGF growth factor family. Snake venom VEGF subfamily. Homodimer; disulfide-linked. Interacts with VEGF receptor-1 (FLT1) with a high affinity, whereas it binds to VEGF receptor-2 (KDR) with a low affinity. Does not bind VEGF receptor-3 (FLT4). Expressed by the venom gland.

The protein localises to the secreted. Its function is as follows. Snake venom VEGFs that may contribute to venom dispersion and prey subjugation by inducing vascular permeability and hypotension. This protein induces an increase in capillary permeability after intradermal injection, as well as a drastic hypotensive effect after intravenous injection. The hypotension is mediated by nitric oxide (NO), which is produced by VEGF-activated endothelium NO synthase. Also induces angiogenesis in vitro. Like other crotalid VEGFs, this protein interacts with VEGF receptor-1 (FLT1) with a high affinity, whereas it binds to VEGF receptor-2 (KDR) with a low affinity. This Sistrurus catenatus edwardsii (Desert massasauga) protein is Snake venom vascular endothelial growth factor toxin 2.